The sequence spans 248 residues: 2,3-bisphosphoglycerate-dependent phosphoglycerate mutase (248 aa).

Residues 10 to 17 (RHGQSEWN), 23 to 24 (TG), arginine 62, 89 to 92 (ERHY), lysine 100, 116 to 117 (RR), and 183 to 184 (GN) each bind substrate. Histidine 11 (tele-phosphohistidine intermediate) is an active-site residue. Residue glutamate 89 is the Proton donor/acceptor of the active site.

Belongs to the phosphoglycerate mutase family. BPG-dependent PGAM subfamily.

It carries out the reaction (2R)-2-phosphoglycerate = (2R)-3-phosphoglycerate. It participates in carbohydrate degradation; glycolysis; pyruvate from D-glyceraldehyde 3-phosphate: step 3/5. Catalyzes the interconversion of 2-phosphoglycerate and 3-phosphoglycerate. This chain is 2,3-bisphosphoglycerate-dependent phosphoglycerate mutase, found in Corynebacterium diphtheriae (strain ATCC 700971 / NCTC 13129 / Biotype gravis).